A 2006-amino-acid chain; its full sequence is Sodium channel protein type 2 subunit alpha (2006 aa).

A Phosphoserine modification is found at Ser4. The tract at residues 28 to 61 (RIAEEKAKRPKQERKDEDDENGPKPNSDLEAGKS) is disordered. Lys38 participates in a covalent cross-link: Glycyl lysine isopeptide (Lys-Gly) (interchain with G-Cter in SUMO1). The I repeat unit spans residues 111 to 456 (ILTPFNPIRK…QQMLEQLKKQ (346 aa)). The chain crosses the membrane as a helical span at residues 130-148 (LFNVLIMCTILTNCVFMTM). The helical transmembrane segment at 156–176 (KNVEYTFTGIYTFESLIKILA) threads the bilayer. A helical transmembrane segment spans residues 191 to 208 (WNWLDFTVITFAYVTEFV). Residues 215–231 (ALRTFRVLRALKTISVI) form a helical membrane-spanning segment. Residues 251–270 (VMILTVFCLSVFALIGLQLF) traverse the membrane as a helical segment. Cys278 and Cys338 are disulfide-bonded. Asn285, Asn291, Asn297, Asn303, Asn308, and Asn340 each carry an N-linked (GlcNAc...) asparagine glycan. Residues 370–394 (FSWAFLSLFRLMTQDFWENLYQLTL) constitute an intramembrane region (pore-forming). A helical membrane pass occupies residues 402-422 (MIFFVLVIFLGSFYLINLILA). Ser468, Ser471, Ser484, Ser526, Ser528, Ser531, Ser553, Ser554, Ser558, Ser573, Ser576, Ser589, Ser610, Ser623, Ser687, Ser688, and Ser722 each carry phosphoserine. Residues 494-529 (SSKSEKELKNRRKKKKQKEQAGEEEKEDAVRKSASE) are disordered. Over residues 511-529 (KEQAGEEEKEDAVRKSASE) the composition is skewed to basic and acidic residues. Positions 589–635 (SENDFADDEHSTFEDNDSRRDSLFVPHRHGERRPSNVSQASRASRGI) are disordered. Basic and acidic residues predominate over residues 596-610 (DEHSTFEDNDSRRDS). Residues 742-1014 (CCKPWLKVKH…QIAVGRMQKG (273 aa)) form an II repeat. A helical membrane pass occupies residues 761–779 (FVDLAITICIVLNTLFMAM). A helical transmembrane segment spans residues 791-810 (VLSVGNLVFTGIFTAEMFLK). The helical transmembrane segment at 825–844 (NIFDGFIVSLSLMELGLANV) threads the bilayer. The chain crosses the membrane as a helical span at residues 847–864 (LSVLRSFRLLRVFKLAKS). A helical membrane pass occupies residues 881-899 (ALGNLTLVLAIIVFIFAVV). A disulfide bond links Cys913 and Cys919. A binds SCN2B region spans residues 918-919 (DC). The pore-forming intramembrane region spans 929–949 (FFHSFLIVFRVLCGEWIETMW). An intrachain disulfide couples Cys951 to Cys960. A helical transmembrane segment spans residues 963 to 983 (VFMMVMVIGNLVVLNLFLALL). Residues 1121–1167 (EEFSSESDMEESKEKLNATSSSEGSTVDIGAPAEGEQPEAEPEESLE) are disordered. The segment covering 1156-1167 (EQPEAEPEESLE) has biased composition (acidic residues). The stretch at 1191–1505 (KGKLWWNLRK…KKYYNAMKKL (315 aa)) is one III repeat. The helical transmembrane segment at 1211 to 1228 (FETFIVFMILLSSGALAF) threads the bilayer. Residues 1242–1260 (MLEYADKVFTYIFILEMLL) form a helical membrane-spanning segment. A helical membrane pass occupies residues 1275 to 1293 (WCWLDFLIVDVSLVSLTAN). Residues 1302–1320 (AIKSLRTLRALRPLRALSR) traverse the membrane as a helical segment. The helical transmembrane segment at 1338-1357 (IMNVLLVCLIFWLIFSIMGV) threads the bilayer. The cysteines at positions 1367 and 1387 are disulfide-linked. Positions 1410-1431 (GLGYLSLLQVATFKGWMDIMYA) form an intramembrane region, pore-forming. A helical membrane pass occupies residues 1449 to 1470 (YMYLYFVIFIIFGSFFTLNLFI). Ser1507 carries the post-translational modification Phosphoserine. The stretch at 1514–1812 (IPRPANKFQG…WEKFDPDATQ (299 aa)) is one IV repeat. Residues 1534–1551 (FDISIMILICLNMVTMMV) form a helical membrane-spanning segment. A helical membrane pass occupies residues 1563–1581 (ILYWINLVFIVLFTGECVL). A helical transmembrane segment spans residues 1594-1611 (GWNIFDFVVVILSIVGMF). The helical transmembrane segment at 1625-1641 (LFRVIRLARIGRILRLI) threads the bilayer. A helical transmembrane segment spans residues 1661–1678 (LFNIGLLLFLVMFIYAIF). Positions 1701–1723 (FGNSMICLFQITTSAGWDGLLAP) form an intramembrane region, pore-forming. Residues Cys1732 and Cys1747 are joined by a disulfide bond. Residues 1754-1776 (IFFFVSYIIISFLVVVNMYIAVI) form a helical membrane-spanning segment. One can recognise an IQ domain in the interval 1906-1935 (EEVSAIVIQRAYRRYLLKQKVKKVSSIYKK). Ser1931 bears the Phosphoserine mark. Over residues 1934 to 1965 (KKDKGKEDEGTPIKEDIITDKLNENSTPEKTD) the composition is skewed to basic and acidic residues. The interval 1934–2006 (KKDKGKEDEG…KGKDIRESKK (73 aa)) is disordered. 3 positions are modified to phosphothreonine: Thr1944, Thr1964, and Thr1967. Ser1972 carries the post-translational modification Phosphoserine. Over residues 1980-2006 (TKPEKEKFEKDKSEKEDKGKDIRESKK) the composition is skewed to basic and acidic residues.

It belongs to the sodium channel (TC 1.A.1.10) family. Nav1.2/SCN2A subfamily. Heterooligomer of a large alpha subunit and a smaller beta subunit. Heterooligomer with SCN2B or SCN4B; disulfide-linked. Interacts with NEDD4L. Interacts with CALM. Interacts with TMEM233. Post-translationally, sumoylated at Lys-38. Sumoylation is induced by hypoxia, increases voltage-gated sodium current and mediates the early response to acute hypoxia in neurons. Sumoylated SCN2A is located at the cell membrane. In terms of tissue distribution, expressed in brain (at protein level). Detected in hippocampus, cortex and brain stem.

It localises to the cell membrane. The catalysed reaction is Na(+)(in) = Na(+)(out). Functionally, mediates the voltage-dependent sodium ion permeability of excitable membranes. Assuming opened or closed conformations in response to the voltage difference across the membrane, the protein forms a sodium-selective channel through which Na(+) ions may pass in accordance with their electrochemical gradient. Implicated in the regulation of hippocampal replay occurring within sharp wave ripples (SPW-R) important for memory. The polypeptide is Sodium channel protein type 2 subunit alpha (Mus musculus (Mouse)).